The primary structure comprises 54 residues: Toxin AnmTx Cj 1c-1 (54 aa).

Residues 1–7 (MLNKRGV) form the signal peptide. 3 disulfide bridges follow: cysteine 9–cysteine 50, cysteine 11–cysteine 41, and cysteine 33–cysteine 51. At glutamate 53 the chain carries Glutamic acid 1-amide.

Belongs to the sea anemone sodium channel inhibitory toxin family. Type I subfamily. Post-translationally, contains 3 disulfide bonds.

It localises to the secreted. Its subcellular location is the nematocyst. Its function is as follows. In vivo, induces marked paralysis on shrimps (C.multidentata) at 10-20 seconds after injection and a weak toxicity when injected into insect larvae (M.domestica). This is Toxin AnmTx Cj 1c-1 from Epiactis japonica (Sea anemone).